We begin with the raw amino-acid sequence, 1167 residues long: RNA-directed RNA polymerase (1167 aa).

The RdRp catalytic domain occupies 553–735 (LTYGILAEAT…KALASYTGLE (183 aa)).

Belongs to the reoviridae RNA-directed RNA polymerase family. Interacts with VP3 (Potential). Interacts with VP2 (Potential). Interacts with NSP5; this interaction is probably necessary for the formation of functional virus factories.

It localises to the virion. The catalysed reaction is RNA(n) + a ribonucleoside 5'-triphosphate = RNA(n+1) + diphosphate. Functionally, RNA-directed RNA polymerase that is involved in both transcription and genome replication. Together with VP3 capping enzyme, forms an enzyme complex positioned near the channels situated at each of the five-fold vertices of the core. Following infection, the outermost layer of the virus is lost, leaving a double-layered particle (DLP) made up of the core and VP6 shell. VP1 then catalyzes the transcription of fully conservative plus-strand genomic RNAs that are extruded through the DLP's channels into the cytoplasm where they function as mRNAs for translation of viral proteins. One copy of each of the viral (+)RNAs is also recruited during core assembly, together with newly synthesized polymerase complexes and VP2. The polymerase of these novo-formed particles catalyzes the synthesis of complementary minus-strands leading to dsDNA formation. To do so, the polymerase specifically recognizes conserved 3' sequence(s) in plus-strand RNA templates. Once dsRNA synthesis is complete, the polymerase switches to the transcriptional mode, thus providing secondary transcription. This chain is RNA-directed RNA polymerase, found in Rotavirus X (strain RVX/Human/China/NADRV-J19/1997/GXP[X]) (RV ADRV-N).